The chain runs to 300 residues: MAETPRLLFVHAHPDDESLGTGATIAHYTAAGADVRVVTCTLGEEGEVIGERWAELAVDRADQLGGYRIGELTAALRELGVGEPCYLGGAGRWRDSGMPGTPRRRRQRFIDADEREAVGALVAIIREQRPHVVVGYDPAGGYGHPDHVHVHTVTTAAVAAAGAGNFPGEPWAVPKFYWSVFATRPFEAAVQALTPEDLRPGWSMPSAEQFTFGYADEHIDAVVAAGPHAWAAKRAALAAHATQVVVGPTGRACALSNNVALPILDEEHYVLVAGAAGARDERGWETDLLAGLEFGAAPRR.

Zn(2+) is bound by residues His-13, Asp-16, and His-147.

The protein belongs to the MshB deacetylase family. Zn(2+) is required as a cofactor.

The enzyme catalyses 1D-myo-inositol 2-acetamido-2-deoxy-alpha-D-glucopyranoside + H2O = 1D-myo-inositol 2-amino-2-deoxy-alpha-D-glucopyranoside + acetate. Its function is as follows. Catalyzes the deacetylation of 1D-myo-inositol 2-acetamido-2-deoxy-alpha-D-glucopyranoside (GlcNAc-Ins) in the mycothiol biosynthesis pathway. This is 1D-myo-inositol 2-acetamido-2-deoxy-alpha-D-glucopyranoside deacetylase from Mycolicibacterium paratuberculosis (strain ATCC BAA-968 / K-10) (Mycobacterium paratuberculosis).